Consider the following 339-residue polypeptide: MNALYKKNFLKLSDFTSLDIRNIINIACILKYQKKNKNEFPYLKNKNIVLIFEKQSTRTRCAFEIASFDQGAQVTYLGPGSTHLGYKESIQDTARVLSSIYDGIQYRGHNHETIKNLAKYSNVPVWNGLTEKFHPTQILADLLTIYETLPEKSFCNIKCAYVGDARNNISNTLLEASSLLGLNLCLVAPKCFWPNYDFFLKCQLKAKKNHGNIICTEDIQKGVRGADFIYTDVWVSMGEPKKTWHNRIKLLKKYQVNLKMLLLTQNKKIKVLHCLPSFHDKNTIVGEEIINKHNLDNGIEITNQVFNSQSDVIFRQSENRLHTIKALLLSTLLKEFPYI.

Carbamoyl phosphate-binding positions include 56–59 (STRT), arginine 107, and 134–137 (HPTQ). Residues asparagine 168, aspartate 232, and 236–237 (SM) contribute to the L-ornithine site. Residues 274–275 (CL) and arginine 320 each bind carbamoyl phosphate.

It belongs to the aspartate/ornithine carbamoyltransferase superfamily. OTCase family.

It localises to the cytoplasm. The enzyme catalyses carbamoyl phosphate + L-ornithine = L-citrulline + phosphate + H(+). The protein operates within amino-acid biosynthesis; L-arginine biosynthesis; L-arginine from L-ornithine and carbamoyl phosphate: step 1/3. Its function is as follows. Reversibly catalyzes the transfer of the carbamoyl group from carbamoyl phosphate (CP) to the N(epsilon) atom of ornithine (ORN) to produce L-citrulline. In Buchnera aphidicola subsp. Baizongia pistaciae (strain Bp), this protein is Ornithine carbamoyltransferase.